Here is a 214-residue protein sequence, read N- to C-terminus: ATP-dependent Clp protease proteolytic subunit (214 aa).

S114 acts as the Nucleophile in catalysis. The active site involves H139.

Belongs to the peptidase S14 family. Fourteen ClpP subunits assemble into 2 heptameric rings which stack back to back to give a disk-like structure with a central cavity, resembling the structure of eukaryotic proteasomes.

It localises to the cytoplasm. It carries out the reaction Hydrolysis of proteins to small peptides in the presence of ATP and magnesium. alpha-casein is the usual test substrate. In the absence of ATP, only oligopeptides shorter than five residues are hydrolyzed (such as succinyl-Leu-Tyr-|-NHMec, and Leu-Tyr-Leu-|-Tyr-Trp, in which cleavage of the -Tyr-|-Leu- and -Tyr-|-Trp bonds also occurs).. Functionally, cleaves peptides in various proteins in a process that requires ATP hydrolysis. Has a chymotrypsin-like activity. Plays a major role in the degradation of misfolded proteins. The sequence is that of ATP-dependent Clp protease proteolytic subunit from Nitrosomonas europaea (strain ATCC 19718 / CIP 103999 / KCTC 2705 / NBRC 14298).